The primary structure comprises 391 residues: Oxygen-dependent coproporphyrinogen-III oxidase, chloroplastic (391 aa).

Residues 1-13 show a composition bias toward polar residues; that stretch reads MASSLLTTPSQTL. The disordered stretch occupies residues 1 to 34; that stretch reads MASSLLTTPSQTLAPNPAAARARRSSPAAAQVSF. Residues 14 to 30 are compositionally biased toward low complexity; sequence APNPAAARARRSSPAAA. The segment at 125–134 is important for dimerization; sequence VLQDGNVFEK. Position 179 (S179) interacts with substrate. H193 serves as the catalytic Proton donor. Residues 195 to 197 and 349 to 354 each bind substrate; these read NYR and GGRIES. The tract at residues 331–366 is important for dimerization; it reads YVEFNLVYDRGTTFGLKTGGRIESILVSLPLTARWE.

Belongs to the aerobic coproporphyrinogen-III oxidase family. In terms of assembly, homodimer.

Its subcellular location is the plastid. It is found in the chloroplast. It carries out the reaction coproporphyrinogen III + O2 + 2 H(+) = protoporphyrinogen IX + 2 CO2 + 2 H2O. Its pathway is porphyrin-containing compound metabolism; protoporphyrin-IX biosynthesis; protoporphyrinogen-IX from coproporphyrinogen-III (O2 route): step 1/1. In terms of biological role, involved in the heme and chlorophyll biosynthesis. Catalyzes the aerobic oxidative decarboxylation of propionate groups of rings A and B of coproporphyrinogen-III to yield the vinyl groups in protoporphyrinogen-IX. This is Oxygen-dependent coproporphyrinogen-III oxidase, chloroplastic (CPX) from Hordeum vulgare (Barley).